Here is a 187-residue protein sequence, read N- to C-terminus: Orotate phosphoribosyltransferase (187 aa).

5-phospho-alpha-D-ribose 1-diphosphate-binding positions include arginine 98, lysine 99, lysine 102, histidine 104, and 128–136 (EDVTTTGGS). Orotate contacts are provided by threonine 132 and arginine 160.

The protein belongs to the purine/pyrimidine phosphoribosyltransferase family. PyrE subfamily. Homodimer. Mg(2+) is required as a cofactor.

The enzyme catalyses orotidine 5'-phosphate + diphosphate = orotate + 5-phospho-alpha-D-ribose 1-diphosphate. The protein operates within pyrimidine metabolism; UMP biosynthesis via de novo pathway; UMP from orotate: step 1/2. Its function is as follows. Catalyzes the transfer of a ribosyl phosphate group from 5-phosphoribose 1-diphosphate to orotate, leading to the formation of orotidine monophosphate (OMP). The polypeptide is Orotate phosphoribosyltransferase (Rhodopseudomonas palustris (strain ATCC BAA-98 / CGA009)).